The primary structure comprises 165 residues: Small ribosomal subunit protein uS17c (165 aa).

The N-terminal 57 residues, 1 to 57 (MSLSFSLLKPPLSSSNPNPFLHGTTTKLSLLPSFSALSLSSSPPSSSTTYTFPVIKA), are a transit peptide targeting the chloroplast. Positions 128–165 (AVAPEGRQSSATRPKPIQAASDELGIPLESQVEGDKTV) are disordered.

Component of the chloroplast small ribosomal subunit (SSU). Mature 70S chloroplast ribosomes of higher plants consist of a small (30S) and a large (50S) subunit. The 30S small subunit contains 1 molecule of ribosomal RNA (16S rRNA) and 24 different proteins. The 50S large subunit contains 3 rRNA molecules (23S, 5S and 4.5S rRNA) and 33 different proteins.

The protein resides in the plastid. Its subcellular location is the chloroplast. Functionally, component of the chloroplast ribosome (chloro-ribosome), a dedicated translation machinery responsible for the synthesis of chloroplast genome-encoded proteins, including proteins of the transcription and translation machinery and components of the photosynthetic apparatus. The protein is Small ribosomal subunit protein uS17c (RPS17) of Spinacia oleracea (Spinach).